The chain runs to 698 residues: NAD(+)--arginine ADP-ribosyltransferase (698 aa).

One can recognise a TR mART core domain in the interval 375–628 (EITKNAWNAA…KLIQAEVMTT (254 aa)). Catalysis depends on residues Arg481, Ser506, and Glu590.

The protein belongs to the Tevenvirinae NAD(+)--arginine ADP-ribosyltransferase family. Proteolytic cleavages at the N- and C-termini by the prohead core protein protease give rise to the mature enzyme.

The protein resides in the virion. It catalyses the reaction L-arginyl-[protein] + NAD(+) = N(omega)-(ADP-D-ribosyl)-L-arginyl-[protein] + nicotinamide + H(+). Its function is as follows. ADP-ribosyltransferase that efficiently ADP-ribosylates one of the two alpha subunits of host RNA polymerase RPOA on an arginine located in the C-terminal region. ADP-ribosylation of RPOA alpha subunit enhances the transcription of viral early genes. Also ribosylates RPOA subunits beta, beta' and sigma 70 and performs an autoribosylation reaction. This is NAD(+)--arginine ADP-ribosyltransferase (alt) from Escherichia coli (Bacteriophage T2).